A 285-amino-acid polypeptide reads, in one-letter code: ATP synthase gamma chain (285 aa).

This sequence belongs to the ATPase gamma chain family. F-type ATPases have 2 components, CF(1) - the catalytic core - and CF(0) - the membrane proton channel. CF(1) has five subunits: alpha(3), beta(3), gamma(1), delta(1), epsilon(1). CF(0) has three main subunits: a, b and c.

The protein localises to the cell membrane. Its function is as follows. Produces ATP from ADP in the presence of a proton gradient across the membrane. The gamma chain is believed to be important in regulating ATPase activity and the flow of protons through the CF(0) complex. The sequence is that of ATP synthase gamma chain from Geobacillus sp. (strain WCH70).